A 262-amino-acid chain; its full sequence is Snake venom serine proteinase 9 (262 aa).

The N-terminal stretch at 1 to 18 is a signal peptide; sequence MVLIRVLANLLILQLSYA. A propeptide spanning residues 19–24 is cleaved from the precursor; the sequence is QKSSEL. Residues 25–253 enclose the Peptidase S1 domain; sequence VIGGDECNID…HLDWIQSIIA (229 aa). Intrachain disulfides connect C31–C165, C52–C68, C144–C214, C176–C193, and C204–C229. The active-site Charge relay system is H67. N105 carries an N-linked (GlcNAc...) asparagine glycan. D112 (charge relay system) is an active-site residue. Residue S208 is the Charge relay system of the active site.

The protein belongs to the peptidase S1 family. Snake venom subfamily. As to quaternary structure, monomer. As to expression, expressed by the venom gland.

It is found in the secreted. In terms of biological role, snake venom serine protease that may act in the hemostasis system of the prey. This chain is Snake venom serine proteinase 9, found in Crotalus adamanteus (Eastern diamondback rattlesnake).